Here is an 86-residue protein sequence, read N- to C-terminus: Small ribosomal subunit protein bS20 (86 aa).

Residues 1 to 26 (MANIKSAKKRAITSEKRRQHNASRRS) form a disordered region.

This sequence belongs to the bacterial ribosomal protein bS20 family.

Its function is as follows. Binds directly to 16S ribosomal RNA. The sequence is that of Small ribosomal subunit protein bS20 from Photobacterium profundum (strain SS9).